We begin with the raw amino-acid sequence, 148 residues long: Small ribosomal subunit protein bS16 (148 aa).

A disordered region spans residues 106–148; that stretch reads QAAARAAAGAEDRPATTPKKAKKSGSAEEAEAAPATDAPAAGQ. The segment covering 137–148 has biased composition (low complexity); sequence AAPATDAPAAGQ.

The protein belongs to the bacterial ribosomal protein bS16 family.

The chain is Small ribosomal subunit protein bS16 from Frankia casuarinae (strain DSM 45818 / CECT 9043 / HFP020203 / CcI3).